The chain runs to 228 residues: Archaeal flagellar ATP-binding protein FlaH (228 aa).

ATP is bound by residues glycine 30, threonine 31, lysine 33, serine 34, valine 35, glutamate 57, and lysine 191. Residue serine 34 coordinates Mg(2+). A Mg(2+)-binding site is contributed by glutamate 57.

This sequence belongs to the FlaH family. The S.acidocaldarius archaellum assembly machinery and its filament consist of seven proteins (FlaB, FlaF, FlaG, FlaH, FlaI, FlaJ and FlaX). Interacts directly with the FlaX ring and the motor ATPase FlaI. Monomers, which can probably form homohexamers upon binding to ATP. In vitro, FlaH assembles as a second ring inside the FlaX ring.

It localises to the archaeal flagellum. Its subcellular location is the cytoplasm. Its function is as follows. Component of the archaellum. FlaX, FlaH and FlaI form the core cytoplasmic motor complex of the crenarchaeal archaellum. FlaH binds ATP with high affinity but lacks detectable in vitro ATPase activity. ATP binding is essential for interaction with FlaI and for archaellum assembly. This Sulfolobus acidocaldarius (strain ATCC 33909 / DSM 639 / JCM 8929 / NBRC 15157 / NCIMB 11770) protein is Archaeal flagellar ATP-binding protein FlaH.